A 790-amino-acid chain; its full sequence is Lysine biosynthesis regulatory protein LYS14 (790 aa).

Disordered stretches follow at residues 1–50 (MFES…SCFE) and 72–157 (FNHK…YSRN). A compositionally biased stretch (low complexity) spans 35-47 (SGSSFTNSGTSTS). 2 stretches are compositionally biased toward polar residues: residues 75 to 113 (KQMT…SEQD) and 120 to 142 (TISQ…TSTV). The zn(2)-C6 fungal-type DNA-binding region spans 159 to 186 (CSECKRRRMKCDETKPTCWQCARLNRQC). The disordered stretch occupies residues 195–258 (KKRRTSNAQR…PKPITDNGKN (64 aa)). Positions 222–239 (ARKRQHSSCKAEKKKKVR) are enriched in basic residues.

The protein resides in the nucleus. Activates the transcription of lysine biosynthesis genes. This activation is dependent on the inducer alpha-aminoadipate semialdehyde and repressed by lysine. This Saccharomyces cerevisiae (strain ATCC 204508 / S288c) (Baker's yeast) protein is Lysine biosynthesis regulatory protein LYS14 (LYS14).